A 607-amino-acid polypeptide reads, in one-letter code: Isocitrate dehydrogenase kinase/phosphatase (607 aa).

ATP-binding positions include 328–334 (APGIKGL) and K349. D384 is an active-site residue.

Belongs to the AceK family.

It is found in the cytoplasm. It carries out the reaction L-seryl-[isocitrate dehydrogenase] + ATP = O-phospho-L-seryl-[isocitrate dehydrogenase] + ADP + H(+). Bifunctional enzyme which can phosphorylate or dephosphorylate isocitrate dehydrogenase (IDH) on a specific serine residue. This is a regulatory mechanism which enables bacteria to bypass the Krebs cycle via the glyoxylate shunt in response to the source of carbon. When bacteria are grown on glucose, IDH is fully active and unphosphorylated, but when grown on acetate or ethanol, the activity of IDH declines drastically concomitant with its phosphorylation. This is Isocitrate dehydrogenase kinase/phosphatase from Cupriavidus metallidurans (strain ATCC 43123 / DSM 2839 / NBRC 102507 / CH34) (Ralstonia metallidurans).